Reading from the N-terminus, the 2178-residue chain is Streptococcal hemagglutinin (2178 aa).

Positions 1 to 90 (MFFKRQKGQY…AVVTSSSVYA (90 aa)) are cleaved as a signal peptide. The interval 91–137 (EEEQALEKVIDTRDVLATRGEAVLSEEAATTLSSEGANPVESLSDTL) is non-repeat region 1 (NR1). The tract at residues 138–219 (SASESASANS…SLISSDSSNS (82 aa)) is ser-rich region 1 (SR1). Positions 192–244 (TSQSFSSTTSSTQSSNNESLISSDSSNSLNTNQSVSARNQNARVRTRRAVAAN) are enriched in low complexity. Disordered regions lie at residues 192 to 246 (TSQS…ANDT), 495 to 557 (VSAS…SVSA), 584 to 653 (SAST…SVSA), 836 to 857 (SASTSASVSASESASTSASVSA), 884 to 917 (SASTSASVSASESASTSASVSASESASTSASVSA), 944 to 993 (SAST…SESA), 1020 to 1289 (SASV…SVSA), 1341 to 1390 (ASTS…ESAS), 1488 to 1685 (SASV…SVSA), 1725 to 1901 (ASTS…SAST), and 2119 to 2151 (LSQSLSDSQSTSATQSMHDRISKGQLPRTGESE). The interval 220–449 (LNTNQSVSAR…ANRVVKDLQI (230 aa)) is non-repeat region 2 (NR2). Positions 450–2143 (SKSNSASQSS…SMHDRISKGQ (1694 aa)) are ser-rich region 2 (SR2). The segment covering 2119–2130 (LSQSLSDSQSTS) has biased composition (low complexity). The LPXTG sorting signal signature appears at 2144–2148 (LPRTG). Thr2147 carries the pentaglycyl murein peptidoglycan amidated threonine modification. Residues 2148 to 2178 (GESESKASILALGIGALGLAFKKRKKNESED) constitute a propeptide, removed by sortase.

This sequence belongs to the serine-rich repeat protein (SRRP) family. The protein is glycosylated in vivo; constructs without SR1 and SR2 are not glycosylated.

The protein resides in the secreted. The protein localises to the cell wall. Its function is as follows. A cell wall protein involved with PadA in host cell interactions required for colonization and pathogensis. Mediates hemagglutination and adherence to ghst glycoproteins. Recognizes fetuin-A (AHSG), a highly glycosylated human plasma protein, also involved in recognition of human platelets, probably via platelet glycoprotein Ib alpha (GP1BA). Acts in concert with PadA to promote binding to glycosylated human fibronectin (FN1) and vitronectin (VTN), and biofilm formation. Plays a major role in fibronectin and vitronectin binding; binding is mediated by glycosylated regions. Probably mediates interaction of PadA with resting platelets. The chain is Streptococcal hemagglutinin from Streptococcus gordonii (strain Challis / ATCC 35105 / BCRC 15272 / CH1 / DL1 / V288).